We begin with the raw amino-acid sequence, 114 residues long: Progonadoliberin-2 (114 aa).

The first 24 residues, 1–24, serve as a signal peptide directing secretion; that stretch reads MASSRRGLLLLLMLLTAHPGPSEA. The residue at position 34 (glycine 34) is a Glycine amide. The disordered stretch occupies residues 35 to 59; sequence GKRALSSAQDPQNALRPPAGSPAQA.

It belongs to the GnRH family.

The protein localises to the secreted. Stimulates the secretion of gonadotropins; it stimulates the secretion of both luteinizing and follicle-stimulating hormones. This is Progonadoliberin-2 (GNRH2) from Macaca mulatta (Rhesus macaque).